Reading from the N-terminus, the 541-residue chain is Glucose-6-phosphate isomerase (541 aa).

The active-site Proton donor is glutamate 346. Active-site residues include histidine 377 and lysine 506.

This sequence belongs to the GPI family.

It is found in the cytoplasm. The enzyme catalyses alpha-D-glucose 6-phosphate = beta-D-fructose 6-phosphate. It functions in the pathway carbohydrate biosynthesis; gluconeogenesis. Its pathway is carbohydrate degradation; glycolysis; D-glyceraldehyde 3-phosphate and glycerone phosphate from D-glucose: step 2/4. In terms of biological role, catalyzes the reversible isomerization of glucose-6-phosphate to fructose-6-phosphate. The sequence is that of Glucose-6-phosphate isomerase from Agrobacterium fabrum (strain C58 / ATCC 33970) (Agrobacterium tumefaciens (strain C58)).